Here is a 338-residue protein sequence, read N- to C-terminus: Phenylalanine--tRNA ligase alpha subunit (338 aa).

Glu252 lines the Mg(2+) pocket.

It belongs to the class-II aminoacyl-tRNA synthetase family. Phe-tRNA synthetase alpha subunit type 1 subfamily. As to quaternary structure, tetramer of two alpha and two beta subunits. Requires Mg(2+) as cofactor.

Its subcellular location is the cytoplasm. It carries out the reaction tRNA(Phe) + L-phenylalanine + ATP = L-phenylalanyl-tRNA(Phe) + AMP + diphosphate + H(+). The chain is Phenylalanine--tRNA ligase alpha subunit from Pseudomonas fluorescens (strain SBW25).